A 365-amino-acid chain; its full sequence is MEVVEILKELLKFKSITPDDDGAMNFINMFMDGFDADFVDVNGIKNLILTKKFGDGVHLCFAGHIDVVPAGDGWDSDPFEPELKDGFVYARGAQDMKSGVAAFLCACKDATKFNGTLSIILTSDEEGDGIYGTLEALKFLKSRGNLPDFALVAEPTSSSTFGDTIKIGRRGSVNGVVTINGVQGHAAYPEKCVNPVHQLASVFSDFAGYELDSGSKYFGASKIVITDIRGGMEVVNVTPKSVKIMFNVRNSELTSCEDIKRYTEHIFNGFDFTLSLKESSKPFLTDESSKIVIQAQKSIENICKISPDLSTSGGTSDARYFAAFGVPVVEFGVVNDRIHAINERVLQSEVESLYLVFKDLIENFE.

His-64 provides a ligand contact to Zn(2+). Residue Asp-66 is part of the active site. Asp-95 contributes to the Zn(2+) binding site. Glu-125 (proton acceptor) is an active-site residue. Positions 126, 154, and 339 each coordinate Zn(2+).

It belongs to the peptidase M20A family. DapE subfamily. As to quaternary structure, homodimer. Zn(2+) serves as cofactor. Requires Co(2+) as cofactor.

It carries out the reaction N-succinyl-(2S,6S)-2,6-diaminopimelate + H2O = (2S,6S)-2,6-diaminopimelate + succinate. It functions in the pathway amino-acid biosynthesis; L-lysine biosynthesis via DAP pathway; LL-2,6-diaminopimelate from (S)-tetrahydrodipicolinate (succinylase route): step 3/3. In terms of biological role, catalyzes the hydrolysis of N-succinyl-L,L-diaminopimelic acid (SDAP), forming succinate and LL-2,6-diaminopimelate (DAP), an intermediate involved in the bacterial biosynthesis of lysine and meso-diaminopimelic acid, an essential component of bacterial cell walls. The chain is Succinyl-diaminopimelate desuccinylase from Campylobacter fetus subsp. fetus (strain 82-40).